Here is a 396-residue protein sequence, read N- to C-terminus: Chorismate synthase (396 aa).

Positions 40 and 46 each coordinate NADP(+). Residues 134-136 (RSS), 257-258 (QA), Gly-302, 317-321 (KPIPS), and Arg-343 contribute to the FMN site.

This sequence belongs to the chorismate synthase family. As to quaternary structure, homotetramer. The cofactor is FMNH2.

It catalyses the reaction 5-O-(1-carboxyvinyl)-3-phosphoshikimate = chorismate + phosphate. Its pathway is metabolic intermediate biosynthesis; chorismate biosynthesis; chorismate from D-erythrose 4-phosphate and phosphoenolpyruvate: step 7/7. Catalyzes the anti-1,4-elimination of the C-3 phosphate and the C-6 proR hydrogen from 5-enolpyruvylshikimate-3-phosphate (EPSP) to yield chorismate, which is the branch point compound that serves as the starting substrate for the three terminal pathways of aromatic amino acid biosynthesis. This reaction introduces a second double bond into the aromatic ring system. The polypeptide is Chorismate synthase (Bifidobacterium animalis subsp. lactis (strain AD011)).